A 499-amino-acid polypeptide reads, in one-letter code: MASINRPIVFFTVCLFLLCNGSLAQQLLGQSTSQWQSSRRGSPRECRFDRLQAFEPIRSVRSQAGTTEFFDVSNEQFQCTGVSVVRRVIEPRGLLLPHYTNGASLVYIIQGRGITGPTFPGCPESYQQQFQQSGQAQLTESQSQSQKFKDEHQKIHRFRQGDVIALPAGVAHWCYNDGEVPVVAIYVTDLNNGANQLDPRQRDFLLAGNKRNPQAYRREVEERSQNIFSGFSTELLSEALGVSSQVARQLQCQNDQRGEIVRVEHGLSLLQPYASLQEQEQGQVQSRERYQEGQYQQSQYGSGCSNGLDETFCTLRVRQNIDNPNRADTYNPRAGRVTNLNTQNFPILSLVQMSAVKVNLYQNALLSPFWNINAHSVVYITQGRARVQVVNNNGKTVFNGELRRGQLLIIPQHYAVVKKAQREGCAYIAFKTNPNSMVSHIAGKSSIFRALPNDVLANAYRISREEAQRLKHNRGDEFGAFTPIQYKSYQDVYNAAESS.

Positions 1 to 24 (MASINRPIVFFTVCLFLLCNGSLA) are cleaved as a signal peptide. Cystine bridges form between Cys-46–Cys-79 and Cys-122–Cys-313. 2 consecutive Cupin type-1 domains span residues 51 to 248 (LQAF…QVAR) and 319 to 468 (QNID…EEAQ).

Belongs to the 11S seed storage protein (globulins) family. In terms of assembly, hexamer; each subunit is composed of an acidic and a basic chain derived from a single precursor and linked by a disulfide bond.

Seed storage protein. The chain is Glutelin type-A 1 (GLUA1) from Oryza sativa subsp. japonica (Rice).